A 236-amino-acid chain; its full sequence is UPF0257 lipoprotein YnfC (236 aa).

The first 16 residues, 1-16, serve as a signal peptide directing secretion; that stretch reads MKKPLLLTLLCMILAG. Cysteine 17 is lipidated: N-palmitoyl cysteine. Residue cysteine 17 is the site of S-diacylglycerol cysteine attachment.

This sequence belongs to the UPF0257 family.

The protein localises to the cell membrane. This chain is UPF0257 lipoprotein YnfC, found in Salmonella paratyphi C (strain RKS4594).